The following is a 177-amino-acid chain: O-acetyl-ADP-ribose deacetylase (177 aa).

The 175-residue stretch at 1-175 folds into the Macro domain; that stretch reads MKSRIHVLQG…LYNRLLTQQG (175 aa). Residues 11–12, asparagine 25, 33–35, and 122–126 contribute to the substrate site; these read DI, GVD, and STGVY. The Proton acceptor role is filled by aspartate 35.

Belongs to the MacroD-type family. YmdB subfamily. In terms of assembly, homodimer. Interacts with RNase III.

The catalysed reaction is 3''-O-acetyl-ADP-D-ribose + H2O = ADP-D-ribose + acetate + H(+). The enzyme catalyses 2''-O-acetyl-ADP-D-ribose + H2O = ADP-D-ribose + acetate + H(+). Functionally, deacetylates O-acetyl-ADP ribose to yield ADP-ribose and free acetate. Down-regulates ribonuclease 3 (RNase III) activity. Acts by interacting directly with the region of the ribonuclease that is required for dimerization/activation. This is O-acetyl-ADP-ribose deacetylase from Escherichia fergusonii (strain ATCC 35469 / DSM 13698 / CCUG 18766 / IAM 14443 / JCM 21226 / LMG 7866 / NBRC 102419 / NCTC 12128 / CDC 0568-73).